A 424-amino-acid chain; its full sequence is Protein FAM43A (424 aa).

Positions 261–297 (QQEEELQEEEEEHLEDCLEEEEEEDGVGDGDPAEEEA) are enriched in acidic residues. 2 disordered regions span residues 261–299 (QQEE…EAEA) and 382–424 (LLSG…PYSG). The segment covering 382-394 (LLSGESTGSESSI) has biased composition (low complexity). Over residues 405–418 (SPGNPSGPADSTSL) the composition is skewed to polar residues.

This sequence belongs to the FAM43 family.

The sequence is that of Protein FAM43A (Fam43a) from Mus musculus (Mouse).